Reading from the N-terminus, the 436-residue chain is tRNA-2-methylthio-N(6)-dimethylallyladenosine synthase (436 aa).

Residues 5–120 (KKLFIQTLGC…IKDVVDVKGA (116 aa)) form the MTTase N-terminal domain. The [4Fe-4S] cluster site is built by C14, C51, C83, C152, C156, and C159. A Radical SAM core domain is found at 138–372 (KTNKYRASVN…IELHKRYLEE (235 aa)). The 62-residue stretch at 375–436 (PKLIGETLNI…RTSLKGEVVN (62 aa)) folds into the TRAM domain.

It belongs to the methylthiotransferase family. MiaB subfamily. As to quaternary structure, monomer. [4Fe-4S] cluster is required as a cofactor.

It localises to the cytoplasm. It carries out the reaction N(6)-dimethylallyladenosine(37) in tRNA + (sulfur carrier)-SH + AH2 + 2 S-adenosyl-L-methionine = 2-methylsulfanyl-N(6)-dimethylallyladenosine(37) in tRNA + (sulfur carrier)-H + 5'-deoxyadenosine + L-methionine + A + S-adenosyl-L-homocysteine + 2 H(+). Its function is as follows. Catalyzes the methylthiolation of N6-(dimethylallyl)adenosine (i(6)A), leading to the formation of 2-methylthio-N6-(dimethylallyl)adenosine (ms(2)i(6)A) at position 37 in tRNAs that read codons beginning with uridine. This Aliarcobacter butzleri (strain RM4018) (Arcobacter butzleri) protein is tRNA-2-methylthio-N(6)-dimethylallyladenosine synthase.